The sequence spans 412 residues: Peptidase T (412 aa).

His-84 lines the Zn(2+) pocket. The active site involves Asp-86. Asp-146 provides a ligand contact to Zn(2+). Glu-179 functions as the Proton acceptor in the catalytic mechanism. The Zn(2+) site is built by Glu-180, Asp-202, and His-385.

The protein belongs to the peptidase M20B family. Zn(2+) is required as a cofactor.

The protein localises to the cytoplasm. It carries out the reaction Release of the N-terminal residue from a tripeptide.. Functionally, cleaves the N-terminal amino acid of tripeptides. The polypeptide is Peptidase T (Haemophilus influenzae (strain PittEE)).